The chain runs to 679 residues: DNA ligase (679 aa).

NAD(+) is bound by residues 32–36 (DTLYD), 81–82 (SL), and Glu115. Lys117 serves as the catalytic N6-AMP-lysine intermediate. The NAD(+) site is built by Arg138, Glu175, Lys293, and Lys317. Cys411, Cys414, Cys429, and Cys434 together coordinate Zn(2+). In terms of domain architecture, BRCT spans 601–679 (NSSGALLGKT…EAELQKLLST (79 aa)).

This sequence belongs to the NAD-dependent DNA ligase family. LigA subfamily. The cofactor is Mg(2+). Mn(2+) serves as cofactor.

The catalysed reaction is NAD(+) + (deoxyribonucleotide)n-3'-hydroxyl + 5'-phospho-(deoxyribonucleotide)m = (deoxyribonucleotide)n+m + AMP + beta-nicotinamide D-nucleotide.. Functionally, DNA ligase that catalyzes the formation of phosphodiester linkages between 5'-phosphoryl and 3'-hydroxyl groups in double-stranded DNA using NAD as a coenzyme and as the energy source for the reaction. It is essential for DNA replication and repair of damaged DNA. The protein is DNA ligase of Parasynechococcus marenigrum (strain WH8102).